We begin with the raw amino-acid sequence, 328 residues long: Malate dehydrogenase (328 aa).

Position 16–22 (16–22 (GAAGQIS)) interacts with NAD(+). 2 residues coordinate substrate: Arg-97 and Arg-103. Residues Asn-110, Gln-117, and 134–136 (VGN) contribute to the NAD(+) site. Substrate is bound by residues Asn-136 and Arg-167. The active-site Proton acceptor is the His-192.

Belongs to the LDH/MDH superfamily. MDH type 2 family.

It carries out the reaction (S)-malate + NAD(+) = oxaloacetate + NADH + H(+). In terms of biological role, catalyzes the reversible oxidation of malate to oxaloacetate. The polypeptide is Malate dehydrogenase (Corynebacterium glutamicum (strain R)).